We begin with the raw amino-acid sequence, 586 residues long: Kelch-like protein 7 (586 aa).

The 68-residue stretch at 44–111 folds into the BTB domain; sequence CDVILMVQER…AYTARISVNS (68 aa). Residues 146 to 248 enclose the BACK domain; the sequence is CLGISVLAEC…SKNFLSKTVQ (103 aa). 6 Kelch repeats span residues 294–336, 337–382, 383–430, 431–481, 483–528, and 530–575; these read RIAL…FWDN, VVYI…AAEG, KIYT…EANG, LIYV…FVKD, IFAV…AVGS, and VYVL…CVVD.

As to quaternary structure, homodimer. Component of the BCR(KLHL7) E3 ubiquitin ligase complex.

Its subcellular location is the nucleus. The protein localises to the cytoplasm. The protein operates within protein modification; protein ubiquitination. Its function is as follows. Substrate-specific adapter of a BCR (BTB-CUL3-RBX1) E3 ubiquitin ligase complex. The BCR(KLHL7) complex acts by mediating ubiquitination and subsequent degradation of substrate proteins. Probably mediates 'Lys-48'-linked ubiquitination. The chain is Kelch-like protein 7 (KLHL7) from Gallus gallus (Chicken).